A 142-amino-acid chain; its full sequence is Small heat shock protein IbpB (142 aa).

Residues 26 to 137 (AGEGQSFPPY…AAQRIAISER (112 aa)) form the sHSP domain.

It belongs to the small heat shock protein (HSP20) family. As to quaternary structure, homodimer. Forms homomultimers of about 100-150 subunits at optimal growth temperatures. Conformation changes to oligomers at high temperatures or high ionic concentrations. The decrease in size of the multimers is accompanied by an increase in chaperone activity.

Its subcellular location is the cytoplasm. Associates with aggregated proteins, together with IbpA, to stabilize and protect them from irreversible denaturation and extensive proteolysis during heat shock and oxidative stress. Aggregated proteins bound to the IbpAB complex are more efficiently refolded and reactivated by the ATP-dependent chaperone systems ClpB and DnaK/DnaJ/GrpE. Its activity is ATP-independent. In Shigella boydii serotype 18 (strain CDC 3083-94 / BS512), this protein is Small heat shock protein IbpB.